The primary structure comprises 538 residues: Chaperonin GroEL (538 aa).

Residues 29–32, 86–90, G413, 476–478, and D492 contribute to the ATP site; these read TLGP, DGTTT, and NAA.

It belongs to the chaperonin (HSP60) family. Forms a cylinder of 14 subunits composed of two heptameric rings stacked back-to-back. Interacts with the co-chaperonin GroES.

The protein localises to the cytoplasm. The enzyme catalyses ATP + H2O + a folded polypeptide = ADP + phosphate + an unfolded polypeptide.. Functionally, together with its co-chaperonin GroES, plays an essential role in assisting protein folding. The GroEL-GroES system forms a nano-cage that allows encapsulation of the non-native substrate proteins and provides a physical environment optimized to promote and accelerate protein folding. The polypeptide is Chaperonin GroEL (Bacillus sp. (strain PS3)).